Consider the following 152-residue polypeptide: Protein-export protein SecB (152 aa).

This sequence belongs to the SecB family. In terms of assembly, homotetramer, a dimer of dimers. One homotetramer interacts with 1 SecA dimer.

The protein localises to the cytoplasm. One of the proteins required for the normal export of preproteins out of the cell cytoplasm. It is a molecular chaperone that binds to a subset of precursor proteins, maintaining them in a translocation-competent state. It also specifically binds to its receptor SecA. The polypeptide is Protein-export protein SecB (Rickettsia massiliae (strain Mtu5)).